We begin with the raw amino-acid sequence, 501 residues long: V-type proton ATPase subunit B 2 (501 aa).

Arg-392 contacts ATP.

This sequence belongs to the ATPase alpha/beta chains family. V-ATPase is a heteromultimeric enzyme made up of two complexes: the ATP-hydrolytic V1 complex and the proton translocation V0 complex. The V1 complex consists of three catalytic AB heterodimers that form a heterohexamer, three peripheral stalks each consisting of EG heterodimers, one central rotor including subunits D and F, and the regulatory subunits C and H. The proton translocation complex V0 consists of the proton transport subunit a, a ring of proteolipid subunits c9c'', rotary subunit d, subunits e and f, and the accessory subunits vah-19/Ac45 and vah-20/PRR. As to expression, predominantly expressed in male and hermaphrodite testis (at protein level).

The protein localises to the cytoplasm. Its function is as follows. Non-catalytic subunit of the V1 complex of vacuolar(H+)-ATPase (V-ATPase), a multisubunit enzyme composed of a peripheral complex (V1) that hydrolyzes ATP and a membrane integral complex (V0) that translocates protons. V-ATPase is responsible for acidifying and maintaining the pH of intracellular compartments and in some cell types, is targeted to the plasma membrane, where it is responsible for acidifying the extracellular environment. In neurons, required for necrotic cell death probably by promoting intracellular acidification. Required for spermatogenesis where it regulates the fibrous body-membranous organelle (FBMO) morphology in spermatocytes and the acidification of FBMO-derived secretory membranous organelles (MOs) as spermatids mature. This chain is V-type proton ATPase subunit B 2, found in Caenorhabditis elegans.